Consider the following 280-residue polypeptide: Protein YibA (280 aa).

This is Protein YibA (yibA) from Escherichia coli O157:H7.